The sequence spans 867 residues: Pentatricopeptide repeat-containing protein At2g39230, mitochondrial (867 aa).

The N-terminal 49 residues, 1-49 (MTTFMVSKRFRPPIFLHRFINPKPISSQTRFLHPPDNQSRDISDSTTET), are a transit peptide targeting the mitochondrion. The interval 27–74 (SQTRFLHPPDNQSRDISDSTTETISTLEFPHKTSVPNHSPLTSTSETE) is disordered. The segment covering 60–72 (SVPNHSPLTSTSE) has biased composition (polar residues). PPR repeat units lie at residues 168-202 (TPRAFNYLLNAYIRNKRMDYAVDCFGLMVDRKVVP), 203-237 (FVPYVNNVLSSLVRSNLIDEAKEIYNKMVLIGVAG), 238-272 (DNVTTQLLMRASLRERKPEEAVKIFRRVMSRGAEP), 273-307 (DGLLFSLAVQAACKTPDLVMALDLLREMRGKLGVP), 309-343 (SQETYTSVIVAFVKEGNMEEAVRVMDEMVGFGIPM), 344-378 (SVIAATSLVNGYCKGNELGKALDLFNRMEEEGLAP), 379-413 (DKVMFSVMVEWFCKNMEMEKAIEFYMRMKSVRIAP), 414-444 (SSVLVHTMIQGCLKAESPEAALEIFNDSFES), 448-482 (HGFMCNKIFLLFCKQGKVDAATSFLKMMEQKGIEP), 483-517 (NVVFYNNMMLAHCRMKNMDLARSIFSEMLEKGLEP), 518-552 (NNFTYSILIDGFFKNKDEQNAWDVINQMNASNFEA), 553-588 (NEVIYNTIINGLCKVGQTSKAKEMLQNLIKEKRYSM), 589-623 (SCTSYNSIIDGFVKVGDTDSAVETYREMSENGKSP), 624-658 (NVVTFTSLINGFCKSNRMDLALEMTHEMKSMELKL), 659-693 (DLPAYGALIDGFCKKNDMKTAYTLFSELPELGLMP), 694-728 (NVSVYNSLISGFRNLGKMDAAIDLYKKMVNDGISC), 729-763 (DLFTYTTMIDGLLKDGNINLASDLYSELLDLGIVP), 764-798 (DEILHMVLVNGLSKKGQFLKASKMLEEMKKKDVTP), and 799-833 (NVLLYSTVIAGHHREGNLNEAFRLHDEMLEKGIVH).

The protein belongs to the PPR family. P subfamily. Expressed in lateral organ junctions and shoot apical meristem (SAM).

It localises to the mitochondrion. In terms of biological role, involved in lateral organ development and boundary demarcation. In Arabidopsis thaliana (Mouse-ear cress), this protein is Pentatricopeptide repeat-containing protein At2g39230, mitochondrial (LOJ).